A 463-amino-acid chain; its full sequence is FAD-dependent monooxygenase str9 (463 aa).

FAD contacts are provided by Glu37, Gly50, and Arg114. The active site involves Arg200. Asp334 is a binding site for FAD.

Belongs to the paxM FAD-dependent monooxygenase family.

It participates in mycotoxin biosynthesis. In terms of biological role, FAD-dependent monooxygenase; part of the gene cluster that mediates the biosynthesis of strobilurin A, an antifungal polyketide that contains a key beta-methoxyacrylate toxophore that targets the complex III of the mitochondrial electron transport chain. Strobilurin biosynthesis begins with construction of benzoyl CoA by step-wise elimination of ammonia from phenylalanine by the phenylalanine ammonia-lyase str11, oxygenation by str8 and retro-Claisen reaction to form benzoic acid, which is activated to its CoA thiolester benzoyl CoA by the dedicated CoA ligase str10. Benzoyl CoA forms the starter unit for the highly reducing polyketide synthase stpks1 that produces the polyketide prestrobilutin A. The FAD-dependent oxygenase str9 then catalyzes the key oxidative rearrangement responsible for the creation of the beta-methoxyacrylate toxophore. Str9 performs epoxidation of the 2,3 olefin of prestrobilutin A, followed by Meinwald rearrangement to furnish the aldehyde intermediate. Rapid enolization of the aldehyde intermediate would give the beta-methoxyacrylate skeleton and methylations catalyzed by str2 and str3 complete the synthesis and lead to the production of strobilurin A. The short-chain dehydrogenase stl2 and the dehydrogenase str4 play a role in the shunt pathway leading to the production of bolineol. The cluster encodes no obvious halogenase gene that could be involved in production of strobilurin B, nor any obvious dimethylallyl-transferase that could be involved in the production of strobilurin G. It is possible that unknown proteins encoded in, or near, the cluster (such as str1 or stl1) may form new classes of halogenases or dimethylally-transferases, or that the responsible genes are located elsewhere on the genome. Similarly, proteins encoded by str5/str6 hydrolases appear to have no chemical role in the biosynthesis of strobilurin A. Finally, no obvious self-resistance gene is found within the cluster. The polypeptide is FAD-dependent monooxygenase str9 (Strobilurus tenacellus).